The following is a 103-amino-acid chain: Histone H4 (103 aa).

Over residues 1–14 the composition is skewed to gly residues; the sequence is MSGRGKGGKGLGKG. The tract at residues 1 to 20 is disordered; sequence MSGRGKGGKGLGKGGAKRHR. Residues 17-21 mediate DNA binding; it reads KRHRK.

This sequence belongs to the histone H4 family. As to quaternary structure, the nucleosome is a histone octamer containing two molecules each of H2A, H2B, H3 and H4 assembled in one H3-H4 heterotetramer and two H2A-H2B heterodimers. The octamer wraps approximately 147 bp of DNA.

The protein localises to the nucleus. It is found in the chromosome. Core component of nucleosome. Nucleosomes wrap and compact DNA into chromatin, limiting DNA accessibility to the cellular machineries which require DNA as a template. Histones thereby play a central role in transcription regulation, DNA repair, DNA replication and chromosomal stability. DNA accessibility is regulated via a complex set of post-translational modifications of histones, also called histone code, and nucleosome remodeling. In Eimeria tenella (Coccidian parasite), this protein is Histone H4.